Here is a 543-residue protein sequence, read N- to C-terminus: Cobyric acid synthase (543 aa).

Positions 260 to 483 constitute a GATase cobBQ-type domain; the sequence is MLDIVLVDLP…LHGVFDADGF (224 aa). Catalysis depends on C346, which acts as the Nucleophile. The active site involves H475.

This sequence belongs to the CobB/CobQ family. CobQ subfamily.

The protein operates within cofactor biosynthesis; adenosylcobalamin biosynthesis. Catalyzes amidations at positions B, D, E, and G on adenosylcobyrinic A,C-diamide. NH(2) groups are provided by glutamine, and one molecule of ATP is hydrogenolyzed for each amidation. The chain is Cobyric acid synthase from Nitratidesulfovibrio vulgaris (strain ATCC 29579 / DSM 644 / CCUG 34227 / NCIMB 8303 / VKM B-1760 / Hildenborough) (Desulfovibrio vulgaris).